The sequence spans 394 residues: S-adenosylmethionine synthase (394 aa).

An ATP-binding site is contributed by H18. Mg(2+) is bound at residue D20. E46 contacts K(+). The L-methionine site is built by E59 and Q104. The tract at residues 104–114 (QSPDIAQGVDA) is flexible loop. Residues 174 to 176 (DCK), 240 to 241 (KF), D249, 255 to 256 (RK), A272, and K276 each bind ATP. An L-methionine-binding site is contributed by D249. L-methionine is bound at residue K280.

Belongs to the AdoMet synthase family. In terms of assembly, homotetramer; dimer of dimers. It depends on Mg(2+) as a cofactor. K(+) serves as cofactor.

It is found in the cytoplasm. It carries out the reaction L-methionine + ATP + H2O = S-adenosyl-L-methionine + phosphate + diphosphate. It participates in amino-acid biosynthesis; S-adenosyl-L-methionine biosynthesis; S-adenosyl-L-methionine from L-methionine: step 1/1. Catalyzes the formation of S-adenosylmethionine (AdoMet) from methionine and ATP. The overall synthetic reaction is composed of two sequential steps, AdoMet formation and the subsequent tripolyphosphate hydrolysis which occurs prior to release of AdoMet from the enzyme. The chain is S-adenosylmethionine synthase from Akkermansia muciniphila (strain ATCC BAA-835 / DSM 22959 / JCM 33894 / BCRC 81048 / CCUG 64013 / CIP 107961 / Muc).